A 497-amino-acid chain; its full sequence is Succinate-semialdehyde dehydrogenase [NADP(+)] (497 aa).

The active-site Proton acceptor is the Glu264. Catalysis depends on Cys298, which acts as the Nucleophile.

Belongs to the aldehyde dehydrogenase family. Homotetramer.

It localises to the cytoplasm. The enzyme catalyses succinate semialdehyde + NAD(+) + H2O = succinate + NADH + 2 H(+). It carries out the reaction succinate semialdehyde + NADP(+) + H2O = succinate + NADPH + 2 H(+). Its pathway is amino-acid degradation; 4-aminobutanoate degradation. With respect to regulation, inhibited by AMP, ADP anf ATP. Catalyzes the oxidation of succinate semialdehyde to succinate. Can utilize both NAD(+) or NADP(+) as a coenzyme, but has a 2.5-fold lower activity with NADP(+) than with NAD(+). Functions in a gamma-aminobutyrate (GABA) degradation pathway that allows growth utilizing GABA as a nitrogen source. Functions in the GABA shunt, which allows to bypass 2 reactions in the TCA cycle by removing alpha-ketoglutarate from the cycle and feeding succinate and NADH back into the cycle. This Saccharomyces cerevisiae (strain ATCC 204508 / S288c) (Baker's yeast) protein is Succinate-semialdehyde dehydrogenase [NADP(+)].